A 371-amino-acid chain; its full sequence is Glutamate 5-kinase (371 aa).

An ATP-binding site is contributed by lysine 14. 3 residues coordinate substrate: serine 54, aspartate 141, and asparagine 153. ATP is bound at residue 173-174 (TD). Positions 280–357 (AGDLILDDGA…TQIEKLLGYI (78 aa)) constitute a PUA domain.

This sequence belongs to the glutamate 5-kinase family.

The protein localises to the cytoplasm. The catalysed reaction is L-glutamate + ATP = L-glutamyl 5-phosphate + ADP. It functions in the pathway amino-acid biosynthesis; L-proline biosynthesis; L-glutamate 5-semialdehyde from L-glutamate: step 1/2. Its function is as follows. Catalyzes the transfer of a phosphate group to glutamate to form L-glutamate 5-phosphate. The sequence is that of Glutamate 5-kinase from Aromatoleum aromaticum (strain DSM 19018 / LMG 30748 / EbN1) (Azoarcus sp. (strain EbN1)).